The sequence spans 459 residues: Argininosuccinate lyase (459 aa).

This sequence belongs to the lyase 1 family. Argininosuccinate lyase subfamily.

It localises to the cytoplasm. The enzyme catalyses 2-(N(omega)-L-arginino)succinate = fumarate + L-arginine. Its pathway is amino-acid biosynthesis; L-arginine biosynthesis; L-arginine from L-ornithine and carbamoyl phosphate: step 3/3. This is Argininosuccinate lyase from Buchnera aphidicola subsp. Schizaphis graminum (strain Sg).